Here is an 85-residue protein sequence, read N- to C-terminus: Omega-conotoxin-like Am6.5 (85 aa).

Positions methionine 1 to alanine 19 are cleaved as a signal peptide. The propeptide occupies aspartate 20–arginine 53. 3 disulfides stabilise this stretch: cysteine 55-cysteine 73, cysteine 62-cysteine 77, and cysteine 72-cysteine 81. Residue glutamine 84 is modified to Glutamine amide.

The protein belongs to the conotoxin O1 family. In terms of processing, is not hydroxylated. As to expression, expressed by the venom duct.

It is found in the secreted. Its function is as follows. Omega-conotoxins act at presynaptic membranes, they bind and block voltage-gated calcium channels (Cav). The protein is Omega-conotoxin-like Am6.5 of Conus amadis (Amadis cone).